The primary structure comprises 1205 residues: Plasma membrane calcium-transporting ATPase 1 (1205 aa).

At 2–104 the chain is on the cytoplasmic side; that stretch reads GDMANNSVAY…KTFLQLVWEA (103 aa). The calmodulin-binding subdomain A stretch occupies residues 94–111; sequence PKTFLQLVWEALQDVTLI. Residues 105 to 125 traverse the membrane as a helical segment; that stretch reads LQDVTLIILEIAAVVSLGLSF. The Extracellular segment spans residues 126–153; the sequence is YQPPGGNEALCGSVNVGEEEEESEAGWI. Residues 154-174 form a helical membrane-spanning segment; the sequence is EGAAILLSVVCVVLVTAFNDW. The Cytoplasmic portion of the chain corresponds to 175-351; sequence SKEKQFRGLQ…KEKSVLQGKL (177 aa). The interval 296 to 343 is disordered; sequence EEEKEKEKKDKKTKAQDGAAMEMQPLKSEDGVDGDEKDKKRSNLPKKE. 2 stretches are compositionally biased toward basic and acidic residues: residues 300–310 and 322–343; these read EKEKKDKKTKA and KSED…PKKE. Residues 352 to 371 form a helical membrane-spanning segment; the sequence is TKLAVQIGKAGLLMSAITVI. Over 372-403 the chain is Extracellular; that stretch reads ILVLYFVIDTSWVQKRPWLAECTPIYIQYFVK. A helical membrane pass occupies residues 404 to 424; that stretch reads FFIIGVTVLVVAVPEGLPLAV. The Cytoplasmic segment spans residues 425-840; the sequence is TISLAYSVKK…RNVYDSISKF (416 aa). Aspartate 460 acts as the 4-aspartylphosphate intermediate in catalysis. Positions 460, 462, and 782 each coordinate Mg(2+). Residues 841–861 form a helical membrane-spanning segment; it reads LQFQLTVNVVAVIVAFTGACI. The Extracellular segment spans residues 862–868; the sequence is TQDSPLK. Residues 869–889 form a helical membrane-spanning segment; the sequence is AVQMLWVNLIMDTLASLALAT. The Cytoplasmic portion of the chain corresponds to 890–912; that stretch reads EPPTEALLLRKPYGRNKPLISRT. A helical membrane pass occupies residues 913 to 933; it reads MMKNILGHAFYQLVVVFTLLF. The Extracellular portion of the chain corresponds to 934–956; it reads AGEKIFDIDSGRNAPLHAPPSEH. The chain crosses the membrane as a helical span at residues 957–976; that stretch reads YTIVFNTFVMMQLFNEINAR. Over 977–990 the chain is Cytoplasmic; that stretch reads KIHGERNVFEGIFN. Residues 991 to 1012 form a helical membrane-spanning segment; sequence NAIFCTIVLGTFVVQIIIVQFG. Residues 1013–1024 lie on the Extracellular side of the membrane; that stretch reads GKPFSCSKLSIE. A helical transmembrane segment spans residues 1025-1045; that stretch reads QWLWSVFLGMGTLLWGQLIST. Residues 1046-1205 lie on the Cytoplasmic side of the membrane; it reads IPTSRLKFLK…SPLHSLETSL (160 aa). Phosphothreonine; by PKC is present on threonine 1101. The disordered stretch occupies residues 1145 to 1205; that stretch reads PLIDDTDAED…SPLHSLETSL (61 aa). Positions 1183–1205 are enriched in polar residues; sequence TDMNKSATSSSPGSPLHSLETSL.

Belongs to the cation transport ATPase (P-type) (TC 3.A.3) family. Type IIB subfamily.

The protein resides in the cell membrane. It catalyses the reaction Ca(2+)(in) + ATP + H2O = Ca(2+)(out) + ADP + phosphate + H(+). In terms of biological role, catalyzes the hydrolysis of ATP coupled with the transport of calcium from the cytoplasm to the extracellular space thereby maintaining intracellular calcium homeostasis. In Gallus gallus (Chicken), this protein is Plasma membrane calcium-transporting ATPase 1.